We begin with the raw amino-acid sequence, 534 residues long: Cytochrome P450 monooxygenase CYP4 (534 aa).

The chain crosses the membrane as a helical span at residues 46–66 (TIIFCVLMSLVGYIVSRIIWG). N-linked (GlcNAc...) asparagine glycosylation occurs at Asn220. Cys477 is a heme binding site. An N-linked (GlcNAc...) asparagine glycan is attached at Asn515.

The protein belongs to the cytochrome P450 family. Heme serves as cofactor.

Its subcellular location is the membrane. Its pathway is secondary metabolite biosynthesis. Functionally, cytochrome P450 monooxygenase; part of the gene cluster that mediates the biosynthesis of a tyrosine-derived cytochalasan acting as a fungal signal recognized by resistant rice plants and leads to avirulence in Pi33 resistant rice cultivars. The first step in the pathway is catalyzed by the hybrid PKS-NRPS ACE1, assisted by the enoyl reductase RAP1, that are responsible for fusion of the tyrosine precursor and the polyketide backbone. The polyketide synthase module (PKS) of ACE1 is responsible for the synthesis of the polyketide backbone and the downstream nonribosomal peptide synthetase (NRPS) amidates the carboxyl end of the polyketide with the tyrosine precursor. Because ACE1 lacks a designated enoylreductase (ER) domain, the required activity is provided the enoyl reductase RAP1. Reduction by the hydrolyase ORFZ, followed by dehydration and intra-molecular Diels-Alder cyclization by the Diels-Alderase ORF3 then yield the required isoindolone-fused macrocycle. A number of oxidative steps catalyzed by the tailoring enzymes identified within the cluster, including cytochrome P450 monooxygenases CYP1 to CYP4, the FAD-linked oxidoreductase OXR2 and the short-chain dehydrogenase/reductase OXR1, are further required to afford the final cytochalasans that confer avirulence and which have still to be identified. The monooxygenase CYP1 has been shown to be a site-selective C-18 hydroxylase whereas the function of CYP3 is the site-selective epoxidation of the C-6/C-7 olefin that is present in some intermediate compounds. Finally, SYN2 and RAP2 are not required for avirulence in Pi33 resistant rice cultivars. The protein is Cytochrome P450 monooxygenase CYP4 of Pyricularia oryzae (strain 70-15 / ATCC MYA-4617 / FGSC 8958) (Rice blast fungus).